The sequence spans 299 residues: Very long chain fatty acid elongase 5 (299 aa).

Position 1 is an N-acetylmethionine (Met1). 7 helical membrane passes run 26-46, 64-84, 112-132, 139-158, 168-187, 205-225, and 226-246; these read WFLL…LLIV, ILVV…CELV, VLWW…FFIL, ITVL…WFVM, FGAT…YGLS, GQLL…IWPC, and TFPL…IALF. Positions 274–299 are disordered; it reads MAAVNGHTNSFSPLENNVKPRKLRKD. Positions 279 to 288 are enriched in polar residues; sequence GHTNSFSPLE. The residue at position 285 (Ser285) is a Phosphoserine.

It belongs to the ELO family. ELOVL5 subfamily. In terms of assembly, interacts with TECR. In terms of tissue distribution, ubiquitous. Highly expressed in the adrenal gland and testis. Weakly expressed in prostate, lung and brain. Expressed in the cerebellum.

It is found in the endoplasmic reticulum membrane. It localises to the cell projection. The protein localises to the dendrite. The enzyme catalyses a very-long-chain acyl-CoA + malonyl-CoA + H(+) = a very-long-chain 3-oxoacyl-CoA + CO2 + CoA. It catalyses the reaction (6Z,9Z,12Z)-octadecatrienoyl-CoA + malonyl-CoA + H(+) = (8Z,11Z,14Z)-3-oxoeicosatrienoyl-CoA + CO2 + CoA. The catalysed reaction is (9Z,12Z,15Z)-octadecatrienoyl-CoA + malonyl-CoA + H(+) = (11Z,14Z,17Z)-3-oxoeicosatrienoyl-CoA + CO2 + CoA. It carries out the reaction (9Z)-hexadecenoyl-CoA + malonyl-CoA + H(+) = 3-oxo-(11Z)-octadecenoyl-CoA + CO2 + CoA. The enzyme catalyses (9Z)-octadecenoyl-CoA + malonyl-CoA + H(+) = 3-oxo-(11Z)-eicosenoyl-CoA + CO2 + CoA. It catalyses the reaction (11Z)-octadecenoyl-CoA + malonyl-CoA + H(+) = 3-oxo-(13Z)-eicosenoyl-CoA + CO2 + CoA. The catalysed reaction is (9Z,12Z)-octadecadienoyl-CoA + malonyl-CoA + H(+) = (11Z,14Z)-3-oxoicosa-11,14-dienoyl-CoA + CO2 + CoA. It carries out the reaction (6Z,9Z,12Z,15Z)-octadecatetraenoyl-CoA + malonyl-CoA + H(+) = (8Z,11Z,14Z,17Z)-3-oxoicosatetraenoyl-CoA + CO2 + CoA. The enzyme catalyses (5Z,8Z,11Z,14Z)-eicosatetraenoyl-CoA + malonyl-CoA + H(+) = (7Z,10Z,13Z,16Z)-3-oxodocosatetraenoyl-CoA + CO2 + CoA. It catalyses the reaction (5Z,8Z,11Z,14Z,17Z)-eicosapentaenoyl-CoA + malonyl-CoA + H(+) = 3-oxo-(7Z,10Z,13Z,16Z,19Z)-docosapentaenoyl-CoA + CO2 + CoA. It functions in the pathway lipid metabolism; polyunsaturated fatty acid biosynthesis. In terms of biological role, catalyzes the first and rate-limiting reaction of the four reactions that constitute the long-chain fatty acids elongation cycle. This endoplasmic reticulum-bound enzymatic process allows the addition of 2 carbons to the chain of long- and very long-chain fatty acids (VLCFAs) per cycle. Condensing enzyme that acts specifically toward polyunsaturated acyl-CoA with the higher activity toward C18:3(n-6) acyl-CoA. May participate in the production of monounsaturated and of polyunsaturated VLCFAs of different chain lengths that are involved in multiple biological processes as precursors of membrane lipids and lipid mediators. In conditions where the essential linoleic and alpha linoleic fatty acids are lacking it is also involved in the synthesis of Mead acid from oleic acid. This is Very long chain fatty acid elongase 5 from Homo sapiens (Human).